A 190-amino-acid chain; its full sequence is UPF0301 protein Pden_0436 (190 aa).

It belongs to the UPF0301 (AlgH) family.

This Paracoccus denitrificans (strain Pd 1222) protein is UPF0301 protein Pden_0436.